The primary structure comprises 235 residues: BPI fold-containing family A member 2 (235 aa).

A signal peptide spans 1–20 (MFQLGSLVVLCGLLIGTSES). Cysteine 161 and cysteine 204 are oxidised to a cystine.

Belongs to the BPI/LBP/Plunc superfamily. Plunc family. As to expression, expressed in parotid, submandibular and sublingual glands.

The protein resides in the secreted. In terms of biological role, has strong antibacterial activity against P.aeruginosa. In Rattus norvegicus (Rat), this protein is BPI fold-containing family A member 2 (Bpifa2).